A 256-amino-acid chain; its full sequence is Lysine-rich coiled-coil protein 1 (256 aa).

Disordered regions lie at residues Q61–R83 and G141–F256. 2 stretches are compositionally biased toward polar residues: residues P64 to Q79 and G141 to Q153. 2 stretches are compositionally biased toward basic and acidic residues: residues H161–K188 and K218–E227. A coiled-coil region spans residues T208 to M247.

In Rattus norvegicus (Rat), this protein is Lysine-rich coiled-coil protein 1 (Krcc1).